The sequence spans 303 residues: Ornithine carbamoyltransferase (303 aa).

Carbamoyl phosphate is bound by residues 53 to 56, Gln80, Arg104, and 131 to 134; these read STRT and HPCQ. L-ornithine contacts are provided by residues Asn162, Asp222, and 226-227; that span reads SM. Carbamoyl phosphate-binding positions include 261 to 262 and Arg289; that span reads CL.

Belongs to the aspartate/ornithine carbamoyltransferase superfamily. OTCase family.

It is found in the cytoplasm. It catalyses the reaction carbamoyl phosphate + L-ornithine = L-citrulline + phosphate + H(+). The protein operates within amino-acid biosynthesis; L-arginine biosynthesis; L-arginine from L-ornithine and carbamoyl phosphate: step 1/3. Its function is as follows. Reversibly catalyzes the transfer of the carbamoyl group from carbamoyl phosphate (CP) to the N(epsilon) atom of ornithine (ORN) to produce L-citrulline. In Mesorhizobium japonicum (strain LMG 29417 / CECT 9101 / MAFF 303099) (Mesorhizobium loti (strain MAFF 303099)), this protein is Ornithine carbamoyltransferase.